Here is a 334-residue protein sequence, read N- to C-terminus: Oligopeptide transport ATP-binding protein OppF (334 aa).

The 254-residue stretch at 12-265 (LEIADLKVHF…PLHPYTRALM (254 aa)) folds into the ABC transporter domain. 57-64 (GESGCGKS) contributes to the ATP binding site.

Belongs to the ABC transporter superfamily. As to quaternary structure, the complex is composed of two ATP-binding proteins (OppD and OppF), two transmembrane proteins (OppB and OppC) and a solute-binding protein (OppA or MppA).

It is found in the cell inner membrane. It catalyses the reaction a [peptide](out) + ATP + H2O = a [peptide](in) + ADP + phosphate + H(+). It carries out the reaction L-alanyl-gamma-D-glutamyl-meso-2,6-diaminopimelate(out) + ATP + H2O = L-alanyl-gamma-D-glutamyl-meso-2,6-diaminopimelate(in) + ADP + phosphate + H(+). Its function is as follows. Part of the ABC transporter complex OppABCDF involved in the uptake of oligopeptides and of the ABC transporter complex MppA-OppBCDF involved in the uptake of the cell wall murein tripeptide L-alanyl-gamma-D-glutamyl-meso-diaminopimelate. Probably responsible for energy coupling to the transport system. Plays an important nutritional role and is involved in the recycling of cell wall peptides. This is Oligopeptide transport ATP-binding protein OppF (oppF) from Escherichia coli (strain K12).